The chain runs to 79 residues: Antimicrobial peptide ToAP2 (79 aa).

Residues 1–23 (MQFKKQLLVIFFAYFLVVNESEA) form the signal peptide. A propeptide spanning residues 50 to 79 (SLMKRELKNLYDPYQRSVEMERLLKELPLY) is cleaved from the precursor.

The protein belongs to the non-disulfide-bridged peptide (NDBP) superfamily. Medium-length antimicrobial peptide (group 3) family. In terms of tissue distribution, expressed by the venom gland.

It localises to the secreted. The protein localises to the target cell membrane. Antimicrobial peptide. Shows antibacterial activity against all M.massiliense bacterial strains tested. Has antifungal activity against Candida spp. and two Cryptococcus neoformans strains with MICs values ranging from 6.25 to 200 uM. Also shows an inhibitory activity on C.albicans biofilms at high concentrations. Exhibits chemotactic activity for monocytes, neutrophils, and eosinophils. Shows low cytotoxic activity and has weak hemolytic activity on human erythrocytes. In vivo, treatment of infected mice with M.massiliense reduces the bacterial load in the liver, lung, and spleen. May act by disrupting the integrity of the bacterial cell membrane. This Tityus obscurus (Amazonian scorpion) protein is Antimicrobial peptide ToAP2.